A 205-amino-acid chain; its full sequence is Putative STAG3-like protein 1 (205 aa).

An SCD domain is found at 10 to 95 (PKVTCRDVLP…GRFKDWMVSM (86 aa)).

This sequence belongs to the SCC3 family.

It is found in the nucleus. This chain is Putative STAG3-like protein 1 (STAG3L1), found in Homo sapiens (Human).